The following is a 255-amino-acid chain: MMHDDPNEAGLPPHDDAIPDEAAEGADAVNPLHHRRIRSFVTRAGRVSTGQRRAMDELGPRFVVPYAPELPDWNAVFGRSAPRILEIGFGMGASTAEIAANRPGDDFLGVEVHEPGVGALLKLIGEQDLSNIRIIQHDAVEVLEHMLAPESLDGVHIFFPDPWHKARHHKRRLIQPPLVAHLVSRLKPGAYIHCATDWQNYAEQMLEVLGAEPTLENTAADYAPRPDYRPVTKFERRGLRLGHGVWDLVFRKRAA.

Residues 1–21 are disordered; it reads MMHDDPNEAGLPPHDDAIPDE. Residues Glu-86, Glu-111, Asp-138, and Asp-161 each contribute to the S-adenosyl-L-methionine site. Residue Asp-161 is part of the active site. Residues Lys-165, Asp-197, and 232 to 235 each bind substrate; that span reads TKFE.

The protein belongs to the class I-like SAM-binding methyltransferase superfamily. TrmB family.

The enzyme catalyses guanosine(46) in tRNA + S-adenosyl-L-methionine = N(7)-methylguanosine(46) in tRNA + S-adenosyl-L-homocysteine. It participates in tRNA modification; N(7)-methylguanine-tRNA biosynthesis. Its function is as follows. Catalyzes the formation of N(7)-methylguanine at position 46 (m7G46) in tRNA. The sequence is that of tRNA (guanine-N(7)-)-methyltransferase from Burkholderia lata (strain ATCC 17760 / DSM 23089 / LMG 22485 / NCIMB 9086 / R18194 / 383).